Here is a 180-residue protein sequence, read N- to C-terminus: Centromere protein M (180 aa).

In terms of assembly, component of the CENPA-NAC complex, at least composed of CENPA, CENPC, CENPH, CENPM, CENPN, CENPT and CENPU. The CENPA-NAC complex interacts with the CENPA-CAD complex, composed of CENPI, CENPK, CENPL, CENPO, CENPP, CENPQ, CENPR and CENPS.

The protein resides in the nucleus. The protein localises to the cytoplasm. Its subcellular location is the chromosome. It localises to the centromere. It is found in the kinetochore. Its function is as follows. Component of the CENPA-NAC (nucleosome-associated) complex, a complex that plays a central role in assembly of kinetochore proteins, mitotic progression and chromosome segregation. The CENPA-NAC complex recruits the CENPA-CAD (nucleosome distal) complex and may be involved in incorporation of newly synthesized CENPA into centromeres. In Bos taurus (Bovine), this protein is Centromere protein M (CENPM).